The primary structure comprises 261 residues: Small ribosomal subunit protein uS2 (261 aa).

The segment at 224–261 is disordered; the sequence is GRQGEDDEAVQQEEVAEGVSKDSLEDLKKTVEEGSNEE. Positions 228–239 are enriched in acidic residues; sequence EDDEAVQQEEVA. Basic and acidic residues predominate over residues 242-255; that stretch reads VSKDSLEDLKKTVE.

This sequence belongs to the universal ribosomal protein uS2 family.

This is Small ribosomal subunit protein uS2 (rpsB) from Pediococcus acidilactici.